The primary structure comprises 1368 residues: MQYSFTEKKRIRKSFAKRSIVHQVPFLLATQLESFSTFLQADVLPAQRKSEGLQAAFTSVFPIVSHNGFARLEFVSYALSSPAFNIKECQQRGLTYCSALRAKVRLVLLDKESPSKPVVKEVKEQEVYMGEIPLMTPTGSFVINGTERVIVSQLHRSPGVFFEHDKGKTHSSGKLLFSARIIPYRGSWLDFEFDPKDVLYFRVDRRRKMPVTILLKAIGLTPEQILANFFVFDNFTLMDEGAQMEFVPERLRGEVARFDITDREGKVIVQKDKRINAKHIRDLEAAKTKYISVPEDYLLGRVLAKNVVDGDTGEVIANANDEITEGVLDKLREAKIKEIQTLYTNDLDQGPYISSTLRVDETVDKTAARIAIYRMMRPGEPPTEEAVEALFNRLFYSEDAYDLSKVGRMKFNRRVGRDEITGPMTLQDDDILATIKILVELRNGKGEVDDIDHLGNRRVRCVGELAENQFRAGLVRVERAVKERLGQAESENLMPHDLINSKPISSAIREFFGSSQLSQFMDQTNPLSEITHKRRVSALGPGGLTRERAGFEVRDVHPTHYGRVCPIETPEGPNIGLINSLALYAHLNEYGFLETPYRKVVDSKVTDQIDYLSAIEEGRYMIAQANAAISNDGSLVDELVSSREAGETMMVTPDRIQYMDVAPSQIVSVAASLIPFLEHDDANRALMGSNMQRQAVPCLRPEKPVVGTGIERTVAVDSGTTVQALRGGVVDYVDAGRIVIRVNDDEAVAGEVGVDIYNLIKYTRSNQNTNINQRPIVKMGDKVARGDVLADGASTDLGELALGQNMLIAFMPWNGYNFEDSILISERVVADDRYTSIHIEELNVVARDTKLGPEEITRDISNLAEVQLGRLDESGIVYIGAEVEAGDVLVGKVTPKGETQLTPEEKLLRAIFGEKASDVKDTSLRVPSGMSGTVIDVQVFTREGIQRDKRAQQIIDDELKRYRLDLNDQLRIVEGDAFQRLARMLVGKVANGGPKKLAKGTKIDQAYLEDLDHYHWFDIRLADDEAAAQLEAIKNSIEEKRHQFDLAFEEKRKKLTQGDELPPGVLKMVKVYLAVKRRLQPGDKMAGRHGNKGVVSKIVPVEDMPYMADGRPADVVLNPLGVPSRMNVGQVLEVHLGWAAKGLGWRIGEMLARQTKIEELRVFLTKIYNESGRAEDLESFSDDEILELAKNLREGVPFATPVFDGATEEEMSKMLDLAFPDDIAEQLDMNPSKNQVRLYDGRTGEPFERRVTVGYMHYLKLHHLVDDKMHARSTGPYSLVTQQPLGGKAQFGGQRFGEMEVWALEAYGASYVLQEMLTVKSDDVTGRTKVYENLVKGDHVIDAGMPESFNVLVKEIRSLGIDIDLDRN.

It belongs to the RNA polymerase beta chain family. In terms of assembly, the RNAP catalytic core consists of 2 alpha, 1 beta, 1 beta' and 1 omega subunit. When a sigma factor is associated with the core the holoenzyme is formed, which can initiate transcription.

The enzyme catalyses RNA(n) + a ribonucleoside 5'-triphosphate = RNA(n+1) + diphosphate. In terms of biological role, DNA-dependent RNA polymerase catalyzes the transcription of DNA into RNA using the four ribonucleoside triphosphates as substrates. The chain is DNA-directed RNA polymerase subunit beta from Burkholderia thailandensis (strain ATCC 700388 / DSM 13276 / CCUG 48851 / CIP 106301 / E264).